The primary structure comprises 142 residues: Large ribosomal subunit protein uL13 (142 aa).

Belongs to the universal ribosomal protein uL13 family. As to quaternary structure, part of the 50S ribosomal subunit.

Functionally, this protein is one of the early assembly proteins of the 50S ribosomal subunit, although it is not seen to bind rRNA by itself. It is important during the early stages of 50S assembly. The protein is Large ribosomal subunit protein uL13 of Pseudoalteromonas atlantica (strain T6c / ATCC BAA-1087).